Consider the following 326-residue polypeptide: Aspartate--ammonia ligase (326 aa).

The protein belongs to the class-II aminoacyl-tRNA synthetase family. AsnA subfamily.

The protein localises to the cytoplasm. It catalyses the reaction L-aspartate + NH4(+) + ATP = L-asparagine + AMP + diphosphate + H(+). The protein operates within amino-acid biosynthesis; L-asparagine biosynthesis; L-asparagine from L-aspartate (ammonia route): step 1/1. This chain is Aspartate--ammonia ligase, found in Malacoplasma penetrans (strain HF-2) (Mycoplasma penetrans).